The following is a 270-amino-acid chain: Glutamate racemase (270 aa).

Substrate-binding positions include 10 to 11 (DS) and 42 to 43 (YG). Residue Cys-74 is the Proton donor/acceptor of the active site. A substrate-binding site is contributed by 75–76 (NT). Residue Cys-189 is the Proton donor/acceptor of the active site. 190–191 (TH) lines the substrate pocket.

Belongs to the aspartate/glutamate racemases family.

It carries out the reaction L-glutamate = D-glutamate. It participates in cell wall biogenesis; peptidoglycan biosynthesis. Provides the (R)-glutamate required for cell wall biosynthesis. The chain is Glutamate racemase from Bartonella quintana (strain Toulouse) (Rochalimaea quintana).